Reading from the N-terminus, the 2133-residue chain is Coagulation factor VIII (2133 aa).

A signal peptide spans 1–19 (MQLELSTCVFLCLLPLGFS). 4 consecutive Plastocyanin-like domains span residues 20-199 (AIRR…LLVC), 207-357 (ERTQ…QLRR), 399-573 (KTWV…LLIC), and 583-730 (NQMM…VYSC). 2 F5/8 type A domains span residues 20–357 (AIRR…QLRR) and 399–730 (KTWV…VYSC). A disulfide bridge connects residues Cys-173 and Cys-199. N-linked (GlcNAc...) asparagine glycans are attached at residues Asn-233 and Asn-259. The cysteines at positions 547 and 573 are disulfide-linked. An N-linked (GlcNAc...) asparagine glycan is attached at Asn-601. Residues Tyr-737, Tyr-738, and Tyr-742 each carry the sulfotyrosine modification. Disordered stretches follow at residues 760–790 (SFAQNSRPPSASQKQFQTITSPEDDVELDPQ) and 804–914 (PSGD…PHPQ). Residues 760 to 1599 (SFAQNSRPPS…LISYPDDQEQ (840 aa)) form a b region. Residues 761 to 780 (FAQNSRPPSASQKQFQTITS) show a composition bias toward polar residues. 2 stretches are compositionally biased toward basic and acidic residues: residues 853–862 (LRPELHHSAE) and 868–878 (EPEKELKKLDS). Residues 879–888 (KMSSSSDLLK) are compositionally biased toward low complexity. Residues 889 to 900 (TSPTIPSDTLSA) are compositionally biased toward polar residues. 3 N-linked (GlcNAc...) asparagine glycosylation sites follow: Asn-929, Asn-985, and Asn-1025. Residues 1042 to 1078 (LGKNPLSSERGPSPELLTSSGSGKSVKGQSSGQGRIR) form a disordered region. Positions 1060 to 1075 (SSGSGKSVKGQSSGQG) are enriched in low complexity. Residue Asn-1111 is glycosylated (N-linked (GlcNAc...) asparagine). Residues 1160–1179 (PSVEGFDGGSHAPVPQDSRS) form a disordered region. N-linked (GlcNAc...) asparagine glycosylation is found at Asn-1181, Asn-1208, Asn-1245, Asn-1265, and Asn-1335. Positions 1200-1221 (EAPLEAPGNRTGPGPRSAVPRR) are disordered. Disordered stretches follow at residues 1358–1391 (LNKVNRPGRTPSKLLGPPMPKEWESLEKSPKSTA) and 1406–1441 (ESNHSIAAKNEGQAETQREAAWTKQGGPGRLCAPKP). A compositionally biased stretch (basic and acidic residues) spans 1378-1387 (KEWESLEKSP). N-linked (GlcNAc...) asparagine glycans are attached at residues Asn-1408 and Asn-1611. Plastocyanin-like domains follow at residues 1495–1659 (RTRH…LLIC) and 1669–1822 (GRQV…SKEC). In terms of domain architecture, F5/8 type A 3 spans 1495 to 1822 (RTRHYFIAAV…TTFLVYSKEC (328 aa)). 3 disulfide bridges follow: Cys-1633/Cys-1659, Cys-1822/Cys-1970, and Cys-1975/Cys-2127. F5/8 type C domains follow at residues 1822–1970 (CQAP…LMGC) and 1975–2127 (CSMP…VLGC). Asn-1919 carries an N-linked (GlcNAc...) asparagine glycan.

The protein belongs to the multicopper oxidase family. Interacts with vWF. vWF binding is essential for the stabilization of F8 in circulation. Post-translationally, proteolytically cleaved by cathepsin CTSG to produce a partially activated form.

The protein localises to the secreted. It is found in the extracellular space. In terms of biological role, factor VIII, along with calcium and phospholipid, acts as a cofactor for factor IXa when it converts factor X to the activated form, factor Xa. This is Coagulation factor VIII (F8) from Sus scrofa (Pig).